A 113-amino-acid polypeptide reads, in one-letter code: Large ribosomal subunit protein P2 (113 aa).

Residues 60-113 (SKVSSLSAGAGPSGGAAAAGADAGAAEAEKEEEPQEEEADVNMGDIFGGDDEDY) are disordered. Residues 74 to 85 (GAAAAGADAGAA) are compositionally biased toward low complexity. Residues 88 to 99 (EKEEEPQEEEAD) are compositionally biased toward acidic residues.

It belongs to the eukaryotic ribosomal protein P1/P2 family. P1 and P2 exist as dimers at the large ribosomal subunit. In terms of processing, phosphorylated.

Plays an important role in the elongation step of protein synthesis. The sequence is that of Large ribosomal subunit protein P2 from Euplotes raikovi.